The chain runs to 201 residues: Peroxiredoxin prdx-2 (201 aa).

Residues 10–168 enclose the Thioredoxin domain; sequence AFIGKPAPQF…TLRLVQAFQF (159 aa). The Cysteine sulfenic acid (-SOH) intermediate role is filled by C55.

The protein belongs to the peroxiredoxin family. AhpC/Prx1 subfamily. In terms of assembly, monomer and homodimer; disulfide-linked. Under nonstress conditions, present in the reduced monomeric form. Forms active hyperoxidized monomers and disulfide-linked homodimers upon oxidation by hydrogen peroxide. Forms active oxidized homodimers in response to the drug metformin. In terms of processing, the enzyme can be inactivated by further oxidation of the cysteine sulfenic acid (C(P)-SOH) to sulphinic acid (C(P)-SO2H) instead of its condensation to a disulfide bond. Expressed in the gonad, neurons and intestine (at protein level). Expressed in the pharyngeal inter-neuron I4 and the sensory interneuron I2. Expressed in the intestine, pharyngeal muscle 1, vulval muscle, body wall muscle, epithelial cells e1 and e3, and neurons in the head and tail.

The protein localises to the cytoplasm. The enzyme catalyses a hydroperoxide + [thioredoxin]-dithiol = an alcohol + [thioredoxin]-disulfide + H2O. With respect to regulation, activated following oxidation of the conserved redox-active cysteine residue, which subsequently allows for the oxidation and activation of substrates. Functionally, thiol-specific peroxidase that catalyzes the reduction of hydrogen peroxide and organic hydroperoxides to water and alcohols, respectively. In I2 pharyngeal neurons, required for the inhibition of feeding in response to light and hydrogen peroxide. In the intestine, plays a role in protecting cells against oxidative stress by detoxifying peroxides such as hydrogen peroxide. In addition, plays a role in the recovery from oxidative stress induced by hydrogen peroxide. In its hyperoxidized form (induced by hydrogen peroxide), confers protection against heat stress. However, has a low tendency for overoxidation during the normal lifespan. Increases sensitivity to cytotoxicity caused by metalloids and heavy metals such as arsenic and cadmium by playing a role in inhibiting the expression of phase II detoxification genes such as gcs-1 in intestinal cells. In addition, in response to arsenite, promotes the secretion of the insulin ligand daf-28 into the pseudocoelom, which negatively regulates the activities of daf-16 and skn-1. Plays a role in promoting longevity. Plays a role in the mitohormetic pathway by promoting the activation of pmk-1 in response to the drug metformin. This Caenorhabditis elegans protein is Peroxiredoxin prdx-2.